A 504-amino-acid chain; its full sequence is MPLLLHPRFPSSHAAACAHRAAAAHRDARPALRLPELHATRRRRNNVACRATRAREAPPQQQNTAAALSKEAHKYFDHAVVTVRAGDGGHGAVLAMPASPSTDAPKSPRRRSDKGKRSGVKKVSYKRNYDGSVALPMGGHGGDVVVYADEAEETLLRFHEKARYCAKRGGNVGATGTLSSRMHNGFAGETLRIPVPVGTVVKRKKGAVLADLAHPGDEVIVARGGQGGISLIDVPEYRRRKAMVLSPNIMRDVSDRVLIHGQPGEEVSLELILRVVADVGLVGLPNAGKSTLLSAITLARPDIADYPFTTLMPNLGRLGGDPALGALQFSSEATLADLPGLIEGAHLGKGLGRNFLRHLRRTRVIVHVVDAAADDPVDDYKIVREELRMYNPQYLERPYVVVLNKIDLPKAQDRLSSLAFEISSIGCEECDGNNTSEDSLNGNTGEHNTSSETKVEGGEKELRDYPRPQAVVGASVLKHIGIDEMLKEIRAALRKCFDHRLPEP.

A compositionally biased stretch (basic and acidic residues) spans 24-39 (AHRDARPALRLPELHA). Disordered stretches follow at residues 24–46 (AHRD…RRNN) and 93–122 (VLAM…GVKK). Residues 73-276 (HKYFDHAVVT…VSLELILRVV (204 aa)) enclose the Obg domain. The segment covering 107–122 (SPRRRSDKGKRSGVKK) has biased composition (basic residues). One can recognise an OBG-type G domain in the interval 277 to 494 (ADVGLVGLPN…MLKEIRAALR (218 aa)). GTP-binding positions include 283 to 290 (GLPNAGKS) and 337 to 341 (DLPGL). A compositionally biased stretch (polar residues) spans 436–452 (SEDSLNGNTGEHNTSSE). A disordered region spans residues 436–463 (SEDSLNGNTGEHNTSSETKVEGGEKELR). Positions 453-463 (TKVEGGEKELR) are enriched in basic and acidic residues.

Belongs to the TRAFAC class OBG-HflX-like GTPase superfamily. OBG GTPase family.

In terms of biological role, may bind GTP and have GTPase activity. The protein is Probable GTP-binding protein OBGC2 of Oryza sativa subsp. japonica (Rice).